A 247-amino-acid chain; its full sequence is 3-deoxy-manno-octulosonate cytidylyltransferase (247 aa).

Belongs to the KdsB family.

It localises to the cytoplasm. The catalysed reaction is 3-deoxy-alpha-D-manno-oct-2-ulosonate + CTP = CMP-3-deoxy-beta-D-manno-octulosonate + diphosphate. The protein operates within nucleotide-sugar biosynthesis; CMP-3-deoxy-D-manno-octulosonate biosynthesis; CMP-3-deoxy-D-manno-octulosonate from 3-deoxy-D-manno-octulosonate and CTP: step 1/1. It functions in the pathway bacterial outer membrane biogenesis; lipopolysaccharide biosynthesis. Its function is as follows. Activates KDO (a required 8-carbon sugar) for incorporation into bacterial lipopolysaccharide in Gram-negative bacteria. In Methylorubrum extorquens (strain PA1) (Methylobacterium extorquens), this protein is 3-deoxy-manno-octulosonate cytidylyltransferase.